Consider the following 258-residue polypeptide: Hydroxyacylglutathione hydrolase (258 aa).

Zn(2+)-binding residues include His-55, His-57, Asp-59, His-60, His-115, Asp-132, and His-170.

The protein belongs to the metallo-beta-lactamase superfamily. Glyoxalase II family. In terms of assembly, monomer. The cofactor is Zn(2+).

It catalyses the reaction an S-(2-hydroxyacyl)glutathione + H2O = a 2-hydroxy carboxylate + glutathione + H(+). It participates in secondary metabolite metabolism; methylglyoxal degradation; (R)-lactate from methylglyoxal: step 2/2. Thiolesterase that catalyzes the hydrolysis of S-D-lactoyl-glutathione to form glutathione and D-lactic acid. The chain is Hydroxyacylglutathione hydrolase from Shewanella halifaxensis (strain HAW-EB4).